The sequence spans 259 residues: Haloacid dehalogenase-like hydrolase domain-containing protein 2 (259 aa).

D13 and S15 together coordinate Mg(2+). Substrate contacts are provided by residues 13–15 (DLS) and 46–47 (TN). A coiled-coil region spans residues 47–71 (NTTKESKQDLLERLRKLEFDISEDE). N6-succinyllysine is present on K50. Position 179 (K179) interacts with substrate. Position 204 (D204) interacts with Mg(2+).

The protein belongs to the HAD-like hydrolase superfamily. Mg(2+) serves as cofactor.

In Pongo abelii (Sumatran orangutan), this protein is Haloacid dehalogenase-like hydrolase domain-containing protein 2 (HDHD2).